Consider the following 335-residue polypeptide: Ketol-acid reductoisomerase (NADP(+)) (335 aa).

In terms of domain architecture, KARI N-terminal Rossmann spans 1 to 182; it reads MATIIYDDET…GATRAGVYET (182 aa). Residues 25–28, Arg48, Ser51, Ser53, and 83–86 each bind NADP(+); these read YGSQ and DEKQ. His108 is a catalytic residue. An NADP(+)-binding site is contributed by Gly134. Residues 183-328 form the KARI C-terminal knotted domain; that stretch reads TFREETETDL…KQIRANIPWL (146 aa). Asp191, Glu195, Glu227, and Glu231 together coordinate Mg(2+). Ser252 provides a ligand contact to substrate.

Belongs to the ketol-acid reductoisomerase family. Mg(2+) serves as cofactor.

The enzyme catalyses (2R)-2,3-dihydroxy-3-methylbutanoate + NADP(+) = (2S)-2-acetolactate + NADPH + H(+). It carries out the reaction (2R,3R)-2,3-dihydroxy-3-methylpentanoate + NADP(+) = (S)-2-ethyl-2-hydroxy-3-oxobutanoate + NADPH + H(+). The protein operates within amino-acid biosynthesis; L-isoleucine biosynthesis; L-isoleucine from 2-oxobutanoate: step 2/4. It participates in amino-acid biosynthesis; L-valine biosynthesis; L-valine from pyruvate: step 2/4. Functionally, involved in the biosynthesis of branched-chain amino acids (BCAA). Catalyzes an alkyl-migration followed by a ketol-acid reduction of (S)-2-acetolactate (S2AL) to yield (R)-2,3-dihydroxy-isovalerate. In the isomerase reaction, S2AL is rearranged via a Mg-dependent methyl migration to produce 3-hydroxy-3-methyl-2-ketobutyrate (HMKB). In the reductase reaction, this 2-ketoacid undergoes a metal-dependent reduction by NADPH to yield (R)-2,3-dihydroxy-isovalerate. The polypeptide is Ketol-acid reductoisomerase (NADP(+)) (Methanosarcina mazei (strain ATCC BAA-159 / DSM 3647 / Goe1 / Go1 / JCM 11833 / OCM 88) (Methanosarcina frisia)).